The chain runs to 932 residues: Protocadherin gamma-A3 (932 aa).

Residues 1–29 (MTNCLSFRNGRGLALLCALLGTLCETGSG) form the signal peptide. 6 Cadherin domains span residues 30-133 (QIRY…APNF), 134-242 (PTEE…PPMF), 243-347 (TQPE…APEI), 348-452 (TITS…PPTF), 453-562 (PHLS…APEI), and 570-682 (DGST…EPSA). Over 30 to 692 (QIRYSVSEEL…KPNDSDLTLY (663 aa)) the chain is Extracellular. 3 N-linked (GlcNAc...) asparagine glycosylation sites follow: asparagine 265, asparagine 419, and asparagine 545. An N-linked (GlcNAc...) asparagine glycan is attached at asparagine 685. A helical transmembrane segment spans residues 693-713 (LVVAVAAVSCVFLALVIVLLA). Over 714-932 (HRLRRWHKSR…KKKSGKKEKK (219 aa)) the chain is Cytoplasmic. Disordered stretches follow at residues 806 to 841 (LLQQAPPNTDWRFSQAQRPGTSGSQNGDDTGTWPNN) and 902 to 932 (ATLTNAAGKRDGKAPAGGNGNKKKSGKKEKK). Basic residues predominate over residues 922-932 (NKKKSGKKEKK).

The protein localises to the cell membrane. Its function is as follows. Potential calcium-dependent cell-adhesion protein. May be involved in the establishment and maintenance of specific neuronal connections in the brain. This chain is Protocadherin gamma-A3 (PCDHGA3), found in Pan troglodytes (Chimpanzee).